A 396-amino-acid chain; its full sequence is 1-deoxy-D-xylulose 5-phosphate reductoisomerase (396 aa).

Residues T17, G18, S19, I20, N47, and N130 each contribute to the NADPH site. Position 131 (K131) interacts with 1-deoxy-D-xylulose 5-phosphate. E132 serves as a coordination point for NADPH. Residue D156 coordinates Mn(2+). 1-deoxy-D-xylulose 5-phosphate contacts are provided by S157, E158, S182, and H205. Position 158 (E158) interacts with Mn(2+). G211 provides a ligand contact to NADPH. Residues S218, N223, K224, and E227 each coordinate 1-deoxy-D-xylulose 5-phosphate. Position 227 (E227) interacts with Mn(2+).

This sequence belongs to the DXR family. Requires Mg(2+) as cofactor. It depends on Mn(2+) as a cofactor.

The catalysed reaction is 2-C-methyl-D-erythritol 4-phosphate + NADP(+) = 1-deoxy-D-xylulose 5-phosphate + NADPH + H(+). It functions in the pathway isoprenoid biosynthesis; isopentenyl diphosphate biosynthesis via DXP pathway; isopentenyl diphosphate from 1-deoxy-D-xylulose 5-phosphate: step 1/6. Catalyzes the NADPH-dependent rearrangement and reduction of 1-deoxy-D-xylulose-5-phosphate (DXP) to 2-C-methyl-D-erythritol 4-phosphate (MEP). This is 1-deoxy-D-xylulose 5-phosphate reductoisomerase from Rhizobium johnstonii (strain DSM 114642 / LMG 32736 / 3841) (Rhizobium leguminosarum bv. viciae).